We begin with the raw amino-acid sequence, 392 residues long: Phosphoglycerate kinase (392 aa).

Residues Asp21–Asn23, Arg36, His59–Arg62, Arg114, and Arg147 contribute to the substrate site. ATP-binding positions include Lys198, Glu320, and Gly346–Thr349.

Belongs to the phosphoglycerate kinase family. Monomer.

Its subcellular location is the cytoplasm. The catalysed reaction is (2R)-3-phosphoglycerate + ATP = (2R)-3-phospho-glyceroyl phosphate + ADP. It participates in carbohydrate degradation; glycolysis; pyruvate from D-glyceraldehyde 3-phosphate: step 2/5. The chain is Phosphoglycerate kinase from Neisseria meningitidis serogroup C / serotype 2a (strain ATCC 700532 / DSM 15464 / FAM18).